A 365-amino-acid polypeptide reads, in one-letter code: MQKLGIFIYSLGSGGAERVVATLLPILSLKFEVHLILMNDKISYEIPECQIHFLECSKPSENPILKFLKLPFLALKYKKLCRNLGIDTEFVFLNRPNYIALMARMFGNKTRLVINECTTPSVMYMKNNFNSLVNKFLISLLYPKADLILPNSKGNLEDLVQNFSISPKKCEILYNAIDLENIGQKALEDIALKDKFILSVGRLDKGKNHALLIRAYARLKTDLKLVILGEGVLKDELLALIKELNLEEKVLLLGFDNNPYKYMAKCEFFAFASVFEGFSNVLIESLACSCAVVCTDHKSGARELFGDDEFGLLVEVDNENSMFQGLKTMLEDDKLRKAYKNKAKTRAKAFDKVKIARDALKYLLG.

Belongs to the glycosyltransferase group 1 family.

The protein localises to the cell inner membrane. The enzyme catalyses N-acetyl-alpha-D-galactosaminyl-(1-&gt;3)-N,N'-diacetyl-alpha-D-bacillosaminyl-tri-trans,hepta-cis-undecaprenyl diphosphate + UDP-N-acetyl-alpha-D-galactosamine = N-acetyl-alpha-D-galactosaminyl-(1-&gt;4)-N-acetyl-alpha-D-galactosaminyl-(1-&gt;3)-N,N'-diacetyl-alpha-D-bacillosaminyl-tri-trans,heptacis-undecaprenyl diphosphate + UDP + H(+). The protein operates within protein modification; protein glycosylation. Its function is as follows. Adds a GalNAc residue on to the Und-PP-Bac2,4diNAc-GalNAc disaccharide in the N-linked protein glycosylation pathway. Transfers the third sugar in the heptasaccharide biosynthesis. This is N-acetylgalactosamine-N,N'-diacetylbacillosaminyl-diphospho-undecaprenol 4-alpha-N-acetylgalactosaminyltransferase (pglJ) from Campylobacter jejuni subsp. jejuni serotype O:2 (strain ATCC 700819 / NCTC 11168).